Here is a 39-residue protein sequence, read N- to C-terminus: Bacteriocin E50-52 (39 aa).

It localises to the secreted. Bacteriocin active against the Gram-negative bacteria C.jejuni, Y.enterocolitica and Y.pseudotuberculosis, and the Gram-positive bacteria S.aureus, S.epidermidis, L.monocytogenes and Listeria spp. When added to the drinking water of chickens, causes a decrease in the levels of C.jejuni and S.enteritidis in the ceca, and in the levels of S.enteritidis in the liver and spleen. The polypeptide is Bacteriocin E50-52 (Enterococcus faecium (Streptococcus faecium)).